A 131-amino-acid chain; its full sequence is Single-stranded DNA-binding protein 1 (131 aa).

Residues 1-103 (MYNKVIAIGR…VLCQSFQLLE (103 aa)) enclose the SSB domain.

As to quaternary structure, homotetramer.

The polypeptide is Single-stranded DNA-binding protein 1 (ssb1) (Streptococcus pyogenes serotype M6 (strain ATCC BAA-946 / MGAS10394)).